Here is a 427-residue protein sequence, read N- to C-terminus: 3-isopropylmalate dehydratase large subunit (427 aa).

[4Fe-4S] cluster is bound by residues cysteine 308, cysteine 368, and cysteine 371.

It belongs to the aconitase/IPM isomerase family. LeuC type 2 subfamily. Heterodimer of LeuC and LeuD. Requires [4Fe-4S] cluster as cofactor.

The catalysed reaction is (2R,3S)-3-isopropylmalate = (2S)-2-isopropylmalate. It functions in the pathway amino-acid biosynthesis; L-leucine biosynthesis; L-leucine from 3-methyl-2-oxobutanoate: step 2/4. Catalyzes the isomerization between 2-isopropylmalate and 3-isopropylmalate, via the formation of 2-isopropylmaleate. The polypeptide is 3-isopropylmalate dehydratase large subunit (Geobacter metallireducens (strain ATCC 53774 / DSM 7210 / GS-15)).